The following is a 596-amino-acid chain: uncharacterized protein (596 aa).

2 stretches are compositionally biased toward basic residues: residues 1-10 (MRLRSQKRGN) and 18-29 (KTRKGKGKKLKP). The tract at residues 1 to 30 (MRLRSQKRGNKFVALPAKTRKGKGKKLKPK) is disordered.

This is an uncharacterized protein from Magallana gigas (Pacific oyster).